Reading from the N-terminus, the 180-residue chain is MSQQQSNNSNDNKEQLDRVIESLNRVNSETKQIVFKMAQGMNEIEIVRSFNQKSCDLFTILINLTKKYRRENDYNVSGYKVLFENAIKIRANLPVDKFTLMILEYAPEIYERDENCFLKMTIPDKKVTLNNEFGVIRSEKFKDLWKVLVQEDKENIADEVTLLTTFAHAYLYKTLLKNSN.

Positions 3–33 (QQQSNNSNDNKEQLDRVIESLNRVNSETKQI) form a coiled coil.

This is an uncharacterized protein from Acanthamoeba polyphaga (Amoeba).